We begin with the raw amino-acid sequence, 284 residues long: D-tagatose-1,6-bisphosphate aldolase subunit GatY (284 aa).

Aspartate 82 (proton donor) is an active-site residue. The Zn(2+) site is built by histidine 83 and histidine 180. A dihydroxyacetone phosphate-binding site is contributed by glycine 181. Histidine 208 provides a ligand contact to Zn(2+). Dihydroxyacetone phosphate is bound by residues 209–211 (GAS) and 230–233 (NVAT).

This sequence belongs to the class II fructose-bisphosphate aldolase family. TagBP aldolase GatY subfamily. In terms of assembly, forms a complex with GatZ. It depends on Zn(2+) as a cofactor.

It carries out the reaction D-tagatofuranose 1,6-bisphosphate = D-glyceraldehyde 3-phosphate + dihydroxyacetone phosphate. The protein operates within carbohydrate metabolism; D-tagatose 6-phosphate degradation; D-glyceraldehyde 3-phosphate and glycerone phosphate from D-tagatose 6-phosphate: step 2/2. In terms of biological role, catalytic subunit of the tagatose-1,6-bisphosphate aldolase GatYZ, which catalyzes the reversible aldol condensation of dihydroxyacetone phosphate (DHAP or glycerone-phosphate) with glyceraldehyde 3-phosphate (G3P) to produce tagatose 1,6-bisphosphate (TBP). Requires GatZ subunit for full activity and stability. Is involved in the catabolism of galactitol. The chain is D-tagatose-1,6-bisphosphate aldolase subunit GatY from Klebsiella pneumoniae subsp. pneumoniae (strain ATCC 700721 / MGH 78578).